A 645-amino-acid polypeptide reads, in one-letter code: Protein hrpC2 (645 aa).

7 helical membrane passes run 18 to 34 (VAIA…MILP), 43 to 59 (LLGI…MVTM), 108 to 124 (LVVG…FLII), 201 to 217 (IAGL…GIVV), 243 to 259 (VSQI…GVMI), 285 to 301 (ARAL…FAFV), and 308 to 324 (LFLL…YTIW). The tract at residues 334 to 354 (DQRKLPSASRKGAKGEAPHIR) is disordered.

It belongs to the FHIPEP (flagella/HR/invasion proteins export pore) family.

The protein localises to the cell inner membrane. Its function is as follows. Involved in the secretion of a proteinaceous elicitor of the hypersensitivity response in plants. The sequence is that of Protein hrpC2 (hrpC2) from Xanthomonas euvesicatoria.